A 359-amino-acid polypeptide reads, in one-letter code: ATP-dependent kinase YFH7 (359 aa).

31 to 39 provides a ligand contact to ATP; it reads GPPGSGKST.

This sequence belongs to the YFH7 family.

ATP-dependent kinase that could be involved in endoplasmic reticulum membrane assembly. The protein is ATP-dependent kinase YFH7 (YFH7) of Vanderwaltozyma polyspora (strain ATCC 22028 / DSM 70294 / BCRC 21397 / CBS 2163 / NBRC 10782 / NRRL Y-8283 / UCD 57-17) (Kluyveromyces polysporus).